A 406-amino-acid chain; its full sequence is Dual-specificity RNA methyltransferase RlmN (406 aa).

The Proton acceptor role is filled by E119. The Radical SAM core domain occupies D125–D370. A disulfide bridge links C132 with C375. Residues C139, C143, and C146 each coordinate [4Fe-4S] cluster. Residues G192 to E193, S224, S246 to H248, and N332 contribute to the S-adenosyl-L-methionine site. The active-site S-methylcysteine intermediate is C375.

The protein belongs to the radical SAM superfamily. RlmN family. [4Fe-4S] cluster is required as a cofactor.

It localises to the cytoplasm. The enzyme catalyses adenosine(2503) in 23S rRNA + 2 reduced [2Fe-2S]-[ferredoxin] + 2 S-adenosyl-L-methionine = 2-methyladenosine(2503) in 23S rRNA + 5'-deoxyadenosine + L-methionine + 2 oxidized [2Fe-2S]-[ferredoxin] + S-adenosyl-L-homocysteine. It catalyses the reaction adenosine(37) in tRNA + 2 reduced [2Fe-2S]-[ferredoxin] + 2 S-adenosyl-L-methionine = 2-methyladenosine(37) in tRNA + 5'-deoxyadenosine + L-methionine + 2 oxidized [2Fe-2S]-[ferredoxin] + S-adenosyl-L-homocysteine. Its function is as follows. Specifically methylates position 2 of adenine 2503 in 23S rRNA and position 2 of adenine 37 in tRNAs. m2A2503 modification seems to play a crucial role in the proofreading step occurring at the peptidyl transferase center and thus would serve to optimize ribosomal fidelity. In Xylella fastidiosa (strain 9a5c), this protein is Dual-specificity RNA methyltransferase RlmN.